Reading from the N-terminus, the 222-residue chain is Putative adhesin RP828 (222 aa).

Residues Met1–Ala22 form the signal peptide.

In terms of biological role, adheres to biotinylated epithelial (Vero cell) proteins. This chain is Putative adhesin RP828, found in Rickettsia prowazekii (strain Madrid E).